Consider the following 66-residue polypeptide: Large ribosomal subunit protein bL35 (66 aa).

It belongs to the bacterial ribosomal protein bL35 family.

This Caulobacter sp. (strain K31) protein is Large ribosomal subunit protein bL35.